The chain runs to 141 residues: Large ribosomal subunit protein uL11 (141 aa).

This sequence belongs to the universal ribosomal protein uL11 family. In terms of assembly, part of the ribosomal stalk of the 50S ribosomal subunit. Interacts with L10 and the large rRNA to form the base of the stalk. L10 forms an elongated spine to which L12 dimers bind in a sequential fashion forming a multimeric L10(L12)X complex. In terms of processing, one or more lysine residues are methylated.

In terms of biological role, forms part of the ribosomal stalk which helps the ribosome interact with GTP-bound translation factors. In Streptococcus pyogenes serotype M1, this protein is Large ribosomal subunit protein uL11.